The following is a 429-amino-acid chain: Glutamate-1-semialdehyde 2,1-aminomutase (429 aa).

The residue at position 267 (lysine 267) is an N6-(pyridoxal phosphate)lysine.

Belongs to the class-III pyridoxal-phosphate-dependent aminotransferase family. HemL subfamily. As to quaternary structure, homodimer. Requires pyridoxal 5'-phosphate as cofactor.

Its subcellular location is the cytoplasm. It carries out the reaction (S)-4-amino-5-oxopentanoate = 5-aminolevulinate. The protein operates within porphyrin-containing compound metabolism; protoporphyrin-IX biosynthesis; 5-aminolevulinate from L-glutamyl-tRNA(Glu): step 2/2. This is Glutamate-1-semialdehyde 2,1-aminomutase from Xanthomonas euvesicatoria pv. vesicatoria (strain 85-10) (Xanthomonas campestris pv. vesicatoria).